The following is a 513-amino-acid chain: Zinc finger CCCH-type with G patch domain-containing protein (513 aa).

A C3H1-type zinc finger spans residues 155–178; sequence PCSYYLEGECRFDEAKCRFSHGAL. A compositionally biased stretch (acidic residues) spans 252-261; that stretch reads DQDEDDELSS. The interval 252–283 is disordered; the sequence is DQDEDDELSSEESNSSMNDNSSDEAESDMDDL. Over residues 262–271 the composition is skewed to low complexity; the sequence is EESNSSMNDN. Acidic residues predominate over residues 272 to 283; that stretch reads SSDEAESDMDDL. The region spanning 312 to 358 is the G-patch domain; the sequence is TRGIGSKLMEKMGYIHGTGLGSDGRGIVTPVSAQILPQGRSLDACME. Polar residues predominate over residues 478–495; that stretch reads VQMQSHKQELATLQAQER. A disordered region spans residues 478-513; that stretch reads VQMQSHKQELATLQAQERSLSKEQQTRKSKNKMFEF. A compositionally biased stretch (basic and acidic residues) spans 496–513; it reads SLSKEQQTRKSKNKMFEF.

It localises to the nucleus. Transcription repressor. This is Zinc finger CCCH-type with G patch domain-containing protein from Drosophila melanogaster (Fruit fly).